A 621-amino-acid chain; its full sequence is 1-deoxy-D-xylulose-5-phosphate synthase (621 aa).

Thiamine diphosphate is bound by residues H80 and 121 to 123 (GHS). Residue D152 coordinates Mg(2+). Residues 153 to 154 (GA), N181, Y288, and E370 each bind thiamine diphosphate. Residue N181 participates in Mg(2+) binding.

Belongs to the transketolase family. DXPS subfamily. As to quaternary structure, homodimer. Mg(2+) serves as cofactor. Thiamine diphosphate is required as a cofactor.

The catalysed reaction is D-glyceraldehyde 3-phosphate + pyruvate + H(+) = 1-deoxy-D-xylulose 5-phosphate + CO2. The protein operates within metabolic intermediate biosynthesis; 1-deoxy-D-xylulose 5-phosphate biosynthesis; 1-deoxy-D-xylulose 5-phosphate from D-glyceraldehyde 3-phosphate and pyruvate: step 1/1. Its function is as follows. Catalyzes the acyloin condensation reaction between C atoms 2 and 3 of pyruvate and glyceraldehyde 3-phosphate to yield 1-deoxy-D-xylulose-5-phosphate (DXP). The sequence is that of 1-deoxy-D-xylulose-5-phosphate synthase from Shewanella sediminis (strain HAW-EB3).